The chain runs to 446 residues: SWI/SNF chromatin-remodeling accessory subunit 1 (446 aa).

The segment at 1-53 (MQTQARPPVPQGPRFNHPATPQQVRRPINAPLPGQTAQIQGNRGPQPPKKKKR) is disordered. The SWIB/MDM2 domain occupies 220-297 (YQPMKFKLHP…PQRLHQLLQQ (78 aa)).

This sequence belongs to the SMARCD family. As to quaternary structure, component of the multiprotein chromatin-remodeling complexes SWI/SNF: SWI/SNF-A (BAF), SWI/SNF-B (PBAF) and related complexes. The canonical complex contains a catalytic subunit swsn-4, core subunits swsn-1 and swsn-5, and accessory subunits swsn-3, swsn-6, phf-10, dpff-1, swsn-9 and either ham-3/swsn-2.1 or swsn-2.2. May interact with blmp-1. As to expression, broadly expressed in all cell types.

The protein resides in the nucleus. Involved in transcriptional activation and repression of select genes by chromatin remodeling (alteration of DNA-nucleosome topology). Component of SWI/SNF chromatin remodeling complexes that carry out key enzymatic activities, changing chromatin structure by altering DNA-histone contacts within a nucleosome in an ATP-dependent manner. Required for the blmp-1-mediated transcriptional activation or repression of several hypodermal genes such as bed-3. Involved in regulating differentiation, migration and axon pathfinding of specific serotonergic neurons (HSNs). Probably regulates vulva development through the let-60/Ras pathway. May be involved in regulation of developmental processes in the embryo driven by the Wnt pathway. Involved in gonadogenesis. This chain is SWI/SNF chromatin-remodeling accessory subunit 1, found in Caenorhabditis elegans.